A 250-amino-acid polypeptide reads, in one-letter code: NADH-quinone oxidoreductase subunit C (250 aa).

It belongs to the complex I 30 kDa subunit family. NDH-1 is composed of 14 different subunits. Subunits NuoB, C, D, E, F, and G constitute the peripheral sector of the complex.

It localises to the cell inner membrane. It catalyses the reaction a quinone + NADH + 5 H(+)(in) = a quinol + NAD(+) + 4 H(+)(out). In terms of biological role, NDH-1 shuttles electrons from NADH, via FMN and iron-sulfur (Fe-S) centers, to quinones in the respiratory chain. The immediate electron acceptor for the enzyme in this species is believed to be ubiquinone. Couples the redox reaction to proton translocation (for every two electrons transferred, four hydrogen ions are translocated across the cytoplasmic membrane), and thus conserves the redox energy in a proton gradient. The sequence is that of NADH-quinone oxidoreductase subunit C from Xylella fastidiosa (strain 9a5c).